A 241-amino-acid chain; its full sequence is Protocatechuate 3,4-dioxygenase beta chain (241 aa).

4 residues coordinate Fe cation: Y109, Y148, H161, and H163.

The protein belongs to the intradiol ring-cleavage dioxygenase family. The enzyme is an oligomer of 12 copies of the alpha and beta chains. It depends on Fe(3+) as a cofactor.

It carries out the reaction 3,4-dihydroxybenzoate + O2 = 3-carboxy-cis,cis-muconate + 2 H(+). It functions in the pathway aromatic compound metabolism; beta-ketoadipate pathway; 3-carboxy-cis,cis-muconate from 3,4-dihydroxybenzoate: step 1/1. Its function is as follows. Plays an essential role in the utilization of numerous aromatic and hydroaromatic compounds via the beta-ketoadipate pathway. This chain is Protocatechuate 3,4-dioxygenase beta chain (pcaH), found in Acinetobacter baylyi (strain ATCC 33305 / BD413 / ADP1).